Here is a 445-residue protein sequence, read N- to C-terminus: ATP-dependent protease ATPase subunit HslU (445 aa).

Residues I18, 60 to 65 (GVGKTE), D258, E323, and R395 contribute to the ATP site.

The protein belongs to the ClpX chaperone family. HslU subfamily. As to quaternary structure, a double ring-shaped homohexamer of HslV is capped on each side by a ring-shaped HslU homohexamer. The assembly of the HslU/HslV complex is dependent on binding of ATP.

It is found in the cytoplasm. Functionally, ATPase subunit of a proteasome-like degradation complex; this subunit has chaperone activity. The binding of ATP and its subsequent hydrolysis by HslU are essential for unfolding of protein substrates subsequently hydrolyzed by HslV. HslU recognizes the N-terminal part of its protein substrates and unfolds these before they are guided to HslV for hydrolysis. This Syntrophotalea carbinolica (strain DSM 2380 / NBRC 103641 / GraBd1) (Pelobacter carbinolicus) protein is ATP-dependent protease ATPase subunit HslU.